The primary structure comprises 314 residues: Olfactory receptor 6C6 (314 aa).

Residues 1 to 24 lie on the Extracellular side of the membrane; sequence MKNKSMEIEFILLGLTDDPQLQIV. N-linked (GlcNAc...) asparagine glycosylation is present at Asn-3. A helical membrane pass occupies residues 25–45; the sequence is IFLFLFLNYTLSLMGNLIIII. The Cytoplasmic segment spans residues 46–63; sequence LTLLDPRLKTPMYFFLRN. The helical transmembrane segment at 64–84 threads the bilayer; the sequence is FSFLEVIFTTVCIPRFLITIV. Over 85-95 the chain is Extracellular; it reads TRDKTISYNNC. A disulfide bridge links Cys-95 with Cys-177. The chain crosses the membrane as a helical span at residues 96-116; sequence ATQLFFILLPGVTEFYLLAAM. Topologically, residues 117–141 are cytoplasmic; that stretch reads SYDRYVAICKPLHYPIIMSSKVCYQ. Residues 142-162 form a helical membrane-spanning segment; it reads LVLSSWVTGFLIIFPPLVMGL. At 163 to 199 the chain is on the extracellular side; the sequence is KLDFCASKTIDHFMCETSPILQISCTDTHVLELMSFT. The helical transmembrane segment at 200-220 threads the bilayer; the sequence is LAVVTLVVTLVLVILSYTCII. At 221 to 237 the chain is on the cytoplasmic side; it reads KTILKFSSAQQRNKAFS. Residues 238–258 form a helical membrane-spanning segment; sequence TCTSHMIVVSMTYGSCIFMYI. Topologically, residues 259–269 are extracellular; it reads KPSAKERVTVS. Residues 270–290 form a helical membrane-spanning segment; that stretch reads KGVALLYTSIAPLLNPFIYTL. Residues 291 to 314 are Cytoplasmic-facing; that stretch reads RNQQVKEVFWDVLQKNLCFSKRPF.

This sequence belongs to the G-protein coupled receptor 1 family.

Its subcellular location is the cell membrane. In terms of biological role, odorant receptor. This Homo sapiens (Human) protein is Olfactory receptor 6C6 (OR6C6).